The following is a 176-amino-acid chain: Inorganic pyrophosphatase (176 aa).

Lys-30, Arg-44, and Tyr-56 together coordinate substrate. Residues Asp-66, Asp-71, and Asp-103 each coordinate Mg(2+). Tyr-142 serves as a coordination point for substrate.

The protein belongs to the PPase family. As to quaternary structure, homohexamer. The cofactor is Mg(2+).

It is found in the cytoplasm. It catalyses the reaction diphosphate + H2O = 2 phosphate + H(+). In terms of biological role, catalyzes the hydrolysis of inorganic pyrophosphate (PPi) forming two phosphate ions. The chain is Inorganic pyrophosphatase from Aeropyrum pernix (strain ATCC 700893 / DSM 11879 / JCM 9820 / NBRC 100138 / K1).